We begin with the raw amino-acid sequence, 128 residues long: Fluoride-specific ion channel FluC (128 aa).

Transmembrane regions (helical) follow at residues 7–29 (LNFI…LGLR), 36–57 (PWGT…VALI), 65–94 (AWIR…DMLE), and 98–126 (YATA…VRLL). Asn43 serves as a coordination point for fluoride. Na(+) is bound by residues Gly77 and Thr80. Fluoride is bound by residues Tyr104, Ser108, and Ser112.

It belongs to the fluoride channel Fluc/FEX (TC 1.A.43) family. As to quaternary structure, homodimer.

It localises to the cell inner membrane. The enzyme catalyses fluoride(in) = fluoride(out). With respect to regulation, na(+) is not transported, but it plays an essential structural role and its presence is essential for fluoride channel function. The Na(+)-binding site is specific for Na(+) over most other cations including K(+) and Mg(2+). Fluoride efflux is inhibited by Li(2+). Functionally, fluoride-specific ion channel. Important for reducing fluoride concentration in the cell, thus reducing its toxicity. Is highly specific for fluoride ions and cannot transport chloride ions. This chain is Fluoride-specific ion channel FluC, found in Bordetella pertussis (strain Tohama I / ATCC BAA-589 / NCTC 13251).